We begin with the raw amino-acid sequence, 418 residues long: Serine hydroxymethyltransferase (418 aa).

(6S)-5,6,7,8-tetrahydrofolate contacts are provided by residues L121 and 125–127 (GHL). The residue at position 230 (K230) is an N6-(pyridoxal phosphate)lysine. (6S)-5,6,7,8-tetrahydrofolate-binding positions include E246 and 355-357 (SPF).

This sequence belongs to the SHMT family. As to quaternary structure, homodimer. The cofactor is pyridoxal 5'-phosphate.

Its subcellular location is the cytoplasm. The catalysed reaction is (6R)-5,10-methylene-5,6,7,8-tetrahydrofolate + glycine + H2O = (6S)-5,6,7,8-tetrahydrofolate + L-serine. It functions in the pathway one-carbon metabolism; tetrahydrofolate interconversion. The protein operates within amino-acid biosynthesis; glycine biosynthesis; glycine from L-serine: step 1/1. Functionally, catalyzes the reversible interconversion of serine and glycine with tetrahydrofolate (THF) serving as the one-carbon carrier. This reaction serves as the major source of one-carbon groups required for the biosynthesis of purines, thymidylate, methionine, and other important biomolecules. Also exhibits THF-independent aldolase activity toward beta-hydroxyamino acids, producing glycine and aldehydes, via a retro-aldol mechanism. The sequence is that of Serine hydroxymethyltransferase from Streptococcus pneumoniae serotype 4 (strain ATCC BAA-334 / TIGR4).